A 264-amino-acid chain; its full sequence is AA9 family lytic polysaccharide monooxygenase A (264 aa).

The signal sequence occupies residues 1–18 (MHFAALAILSSLVASAAA). His19 is a Cu(2+) binding site. Asn51 and Asn75 each carry an N-linked (GlcNAc...) asparagine glycan. Cysteines 59 and 182 form a disulfide. His96 is a binding site for Cu(2+). An N-linked (GlcNAc...) asparagine glycan is attached at Asn110. Residue His162 participates in O2 binding. Tyr179 is a Cu(2+) binding site. N-linked (GlcNAc...) asparagine glycosylation is found at Asn218 and Asn251.

The protein belongs to the polysaccharide monooxygenase AA9 family. The cofactor is Cu(2+).

It localises to the secreted. It carries out the reaction [(1-&gt;4)-beta-D-glucosyl]n+m + reduced acceptor + O2 = 4-dehydro-beta-D-glucosyl-[(1-&gt;4)-beta-D-glucosyl]n-1 + [(1-&gt;4)-beta-D-glucosyl]m + acceptor + H2O.. Lytic polysaccharide monooxygenase (LPMO) that depolymerizes crystalline and amorphous polysaccharides via the oxidation of scissile alpha- or beta-(1-4)-glycosidic bonds, yielding C4 oxidation products. Catalysis by LPMOs requires the reduction of the active-site copper from Cu(II) to Cu(I) by a reducing agent and H(2)O(2) or O(2) as a cosubstrate. Active on cellulose and cello-oligosaccharides, as well as plant cell wall-derived hemicellulosic polysaccharides. Also active on cello-oligosaccharides such as cellohexaose, cellopentaose or cellotetraose. This chain is AA9 family lytic polysaccharide monooxygenase A, found in Phanerochaete carnosa (strain HHB-10118-sp) (White-rot fungus).